Here is a 586-residue protein sequence, read N- to C-terminus: Phosphomethylpyrimidine synthase (586 aa).

Residues 1–59 (MKQSVSAEQIELKSSLPGSKKVYVDGPREGMKVPMREIEQSDTNGVPNPPIRVYDTSGP) form a disordered region. A compositionally biased stretch (basic and acidic residues) spans 22–39 (VYVDGPREGMKVPMREIE). Residues Asn193, Met222, Tyr251, His287, 307–309 (SRG), 348–351 (DGLR), and Glu387 each bind substrate. His391 is a binding site for Zn(2+). Tyr414 is a binding site for substrate. His455 lines the Zn(2+) pocket. Positions 535, 538, and 543 each coordinate [4Fe-4S] cluster.

The protein belongs to the ThiC family. It depends on [4Fe-4S] cluster as a cofactor.

It catalyses the reaction 5-amino-1-(5-phospho-beta-D-ribosyl)imidazole + S-adenosyl-L-methionine = 4-amino-2-methyl-5-(phosphooxymethyl)pyrimidine + CO + 5'-deoxyadenosine + formate + L-methionine + 3 H(+). It functions in the pathway cofactor biosynthesis; thiamine diphosphate biosynthesis. Functionally, catalyzes the synthesis of the hydroxymethylpyrimidine phosphate (HMP-P) moiety of thiamine from aminoimidazole ribotide (AIR) in a radical S-adenosyl-L-methionine (SAM)-dependent reaction. The protein is Phosphomethylpyrimidine synthase of Bacillus cereus (strain Q1).